The chain runs to 704 residues: Elongation factor G (704 aa).

The region spanning 9 to 285 (AKVRNIGIMA…AIVAYLPSPL (277 aa)) is the tr-type G domain. GTP-binding positions include 18 to 25 (AHIDAGKT), 82 to 86 (DTPGH), and 136 to 139 (NKMD).

This sequence belongs to the TRAFAC class translation factor GTPase superfamily. Classic translation factor GTPase family. EF-G/EF-2 subfamily.

The protein resides in the cytoplasm. Functionally, catalyzes the GTP-dependent ribosomal translocation step during translation elongation. During this step, the ribosome changes from the pre-translocational (PRE) to the post-translocational (POST) state as the newly formed A-site-bound peptidyl-tRNA and P-site-bound deacylated tRNA move to the P and E sites, respectively. Catalyzes the coordinated movement of the two tRNA molecules, the mRNA and conformational changes in the ribosome. The sequence is that of Elongation factor G from Thermobifida fusca (strain YX).